Reading from the N-terminus, the 64-residue chain is Putative isoleucine--tRNA ligase (64 aa).

The protein belongs to the class-I aminoacyl-tRNA synthetase family. In terms of assembly, member of a complex that includes annexin.

The enzyme catalyses tRNA(Ile) + L-isoleucine + ATP = L-isoleucyl-tRNA(Ile) + AMP + diphosphate. This is Putative isoleucine--tRNA ligase from Physarum polycephalum (Slime mold).